The chain runs to 163 residues: NADH-quinone oxidoreductase subunit I (163 aa).

2 4Fe-4S ferredoxin-type domains span residues 53–83 (LRRYPNGEERCIACKLCEAICPAQAITIEAG) and 94–123 (VRYDIDMVKCIYCGFCQEACPVDAIVEGPN). The [4Fe-4S] cluster site is built by C63, C66, C69, C73, C103, C106, C109, and C113.

It belongs to the complex I 23 kDa subunit family. As to quaternary structure, NDH-1 is composed of 14 different subunits. Subunits NuoA, H, J, K, L, M, N constitute the membrane sector of the complex. [4Fe-4S] cluster is required as a cofactor.

The protein localises to the cell inner membrane. The enzyme catalyses a quinone + NADH + 5 H(+)(in) = a quinol + NAD(+) + 4 H(+)(out). Its function is as follows. NDH-1 shuttles electrons from NADH, via FMN and iron-sulfur (Fe-S) centers, to quinones in the respiratory chain. The immediate electron acceptor for the enzyme in this species is believed to be ubiquinone. Couples the redox reaction to proton translocation (for every two electrons transferred, four hydrogen ions are translocated across the cytoplasmic membrane), and thus conserves the redox energy in a proton gradient. In Brucella anthropi (strain ATCC 49188 / DSM 6882 / CCUG 24695 / JCM 21032 / LMG 3331 / NBRC 15819 / NCTC 12168 / Alc 37) (Ochrobactrum anthropi), this protein is NADH-quinone oxidoreductase subunit I.